The primary structure comprises 77 residues: Phytosulfokines 5 (77 aa).

Residues 1-24 form the signal peptide; it reads MVKFTTFLCIIALLLCSTLTHASA. A propeptide spanning residues 25-68 is cleaved from the precursor; sequence RLNPTSVYPEENSFKKLEQGEVICEGVGEEECFLIRRTLVAHTD. 2 positions are modified to sulfotyrosine: Tyr69 and Tyr71. The propeptide occupies 74 to 77; it reads NHNP.

The protein belongs to the phytosulfokine family. Sulfation is important for activity and for the binding to a putative membrane receptor. Post-translationally, PSK-beta is an enzymatic derivative of PSK-alpha. In terms of tissue distribution, expressed in stems, roots, mature leaves and flowers. Most abundant in vascular bundles.

Its subcellular location is the secreted. Functionally, promotes plant cell differentiation, organogenesis and somatic embryogenesis as well as cell proliferation. May be involved in the low quiescent center cell proliferation. The sequence is that of Phytosulfokines 5 (PSK5) from Arabidopsis thaliana (Mouse-ear cress).